The primary structure comprises 226 residues: 2,3-bisphosphoglycerate-dependent phosphoglycerate mutase (226 aa).

Substrate is bound by residues 8–15, 21–22, R58, 109–112, K120, 136–137, and 180–181; these read RHGQSVWN, TG, ERMY, RR, and GN. H9 (tele-phosphohistidine intermediate) is an active-site residue. E109 functions as the Proton donor/acceptor in the catalytic mechanism.

It belongs to the phosphoglycerate mutase family. BPG-dependent PGAM subfamily.

The enzyme catalyses (2R)-2-phosphoglycerate = (2R)-3-phosphoglycerate. Its pathway is carbohydrate degradation; glycolysis; pyruvate from D-glyceraldehyde 3-phosphate: step 3/5. In terms of biological role, catalyzes the interconversion of 2-phosphoglycerate and 3-phosphoglycerate. This Chlamydia muridarum (strain MoPn / Nigg) protein is 2,3-bisphosphoglycerate-dependent phosphoglycerate mutase.